Here is a 440-residue protein sequence, read N- to C-terminus: MEQLAHLYHEHISELNRRVADITSRENLSGLVIHSGQPHRQFLDDMDYPFKVNPHFKAWLPVIDNPNSWLVVNGHDKPTLIFYRPVDFWHKVADEPTDFWAEYVDIKYLTKADKVAEFLPADIDNWAYIGEHLDVADVLGFNRRNPDSVLSYLNYHRADKTAYELACMRKSNSIAVTGHQAAKTAFYNGASEFEILQVYLSAISQGENQVPYSSIVALNENAAILHYTALEQTSPPQRLSFLIDAGANFHGYASDITRSYAFEKNIFDDLITAMDSMQLQIIAMMKPGVSYVDLHVATHHKLAQILIDFDIATGDAAGLVEQGITSAFFPHGLGHMLGLQVHDMGGFLADEKGTHIASPAEHPFLRCTRTLAENQVLTIEPGVYIIDSLLAQLKQDNRQQQVNWNTVDILRPFGGIRIEDNVIVHCDRTENMTRNFGLNR.

Mn(2+) contacts are provided by D244, D255, H335, E380, and E419.

The protein belongs to the peptidase M24B family. Bacterial-type prolidase subfamily. Mn(2+) serves as cofactor.

The enzyme catalyses Xaa-L-Pro dipeptide + H2O = an L-alpha-amino acid + L-proline. Splits dipeptides with a prolyl residue in the C-terminal position. The protein is Xaa-Pro dipeptidase of Shewanella piezotolerans (strain WP3 / JCM 13877).